Here is a 375-residue protein sequence, read N- to C-terminus: Erythronate-4-phosphate dehydrogenase (375 aa).

Substrate contacts are provided by Ser-45 and Thr-66. Residues Asp-146, Thr-175, Ala-206–Arg-208, and Asp-232 each bind NAD(+). Arg-208 is a catalytic residue. Glu-237 is a catalytic residue. His-254 functions as the Proton donor in the catalytic mechanism. Gly-257 is a binding site for NAD(+). Substrate is bound at residue Tyr-258.

Belongs to the D-isomer specific 2-hydroxyacid dehydrogenase family. PdxB subfamily. In terms of assembly, homodimer.

The protein resides in the cytoplasm. The catalysed reaction is 4-phospho-D-erythronate + NAD(+) = (R)-3-hydroxy-2-oxo-4-phosphooxybutanoate + NADH + H(+). It participates in cofactor biosynthesis; pyridoxine 5'-phosphate biosynthesis; pyridoxine 5'-phosphate from D-erythrose 4-phosphate: step 2/5. Catalyzes the oxidation of erythronate-4-phosphate to 3-hydroxy-2-oxo-4-phosphonooxybutanoate. The protein is Erythronate-4-phosphate dehydrogenase of Photorhabdus laumondii subsp. laumondii (strain DSM 15139 / CIP 105565 / TT01) (Photorhabdus luminescens subsp. laumondii).